The sequence spans 452 residues: Gastrin/cholecystokinin type B receptor (452 aa).

Over 1 to 55 the chain is Extracellular; that stretch reads MELVKLNRSVQGSGPVASLCRPGGPLLNNSGTGNLSCEPPRIRGAGTRELELAIR. Residues Asn7, Asn28, and Asn34 are each glycosylated (N-linked (GlcNAc...) asparagine). The helical transmembrane segment at 56 to 77 threads the bilayer; sequence VTLYAVIFLMSVGGNILIIVVL. Topologically, residues 78 to 85 are cytoplasmic; that stretch reads GLSRRLRT. The chain crosses the membrane as a helical span at residues 86-107; that stretch reads VTNAFLLSLAVSDLLLAVACMP. Topologically, residues 108 to 129 are extracellular; the sequence is FTLLPNLMGTFIFGTVICKAVS. Cys125 and Cys203 are oxidised to a cystine. A helical transmembrane segment spans residues 130 to 148; it reads YLMGVSVSVSTLSLVAIAL. Residues 149 to 168 are Cytoplasmic-facing; it reads ERYSAICRPLQARVWQTRSH. A helical membrane pass occupies residues 169 to 187; sequence AARVILATWLLSGLLMVPY. Over 188–217 the chain is Extracellular; that stretch reads PVYTAVQPVGPRVLQCVHRWPSARVRQTWS. A helical membrane pass occupies residues 218–240; it reads VLLLLLLFFVPGVVMAVAYGLIS. The Cytoplasmic segment spans residues 241–338; that stretch reads RELYLGLRFD…KLLAKKRVVR (98 aa). Residues 255-285 are disordered; the sequence is SESQSRVRGQGGLPGGAAPGPVHQNGRCRPE. Gly residues predominate over residues 263–272; the sequence is GQGGLPGGAA. A helical membrane pass occupies residues 339–360; that stretch reads MLLVIVVLFFMCWLPVYSANTW. Over 361 to 378 the chain is Extracellular; sequence RAFDGPGAHRALSGAPIS. The helical transmembrane segment at 379–399 threads the bilayer; the sequence is FIHLLSYASACVNPLVYCFMH. The Cytoplasmic portion of the chain corresponds to 400–452; sequence RRFRQACLDTCARCCPRPPRARPRPLPDEDPPTPSIASLSRLSYTTISTLGPG. Residue Cys413 is the site of S-palmitoyl cysteine attachment.

The protein belongs to the G-protein coupled receptor 1 family.

It localises to the cell membrane. Functionally, receptor for gastrin and cholecystokinin. The CCK-B receptors occur throughout the central nervous system where they modulate anxiety, analgesia, arousal, and neuroleptic activity. This receptor mediates its action by association with G proteins that activate a phosphatidylinositol-calcium second messenger system. The chain is Gastrin/cholecystokinin type B receptor (CCKBR) from Oryctolagus cuniculus (Rabbit).